A 333-amino-acid polypeptide reads, in one-letter code: T-cell surface glycoprotein CD1b-2 (333 aa).

An N-terminal signal peptide occupies residues 1 to 20 (MLLLPLLLLGVILPGGDNED). Over 21-302 (VFQGPTSFHL…LYWGHPTSIG (282 aa)) the chain is Extracellular. N-linked (GlcNAc...) asparagine glycans are attached at residues Asn-38, Asn-75, and Asn-146. 3 disulfide bridges follow: Cys-120–Cys-184, Cys-149–Cys-163, and Cys-224–Cys-279. The 111-residue stretch at 185–295 (PRYLLGVLDA…LGDQDIILYW (111 aa)) folds into the Ig-like domain. The chain crosses the membrane as a helical span at residues 303–323 (LILVAIIVPSLILSICLALWF). Topologically, residues 324-333 (WRRWSYQNIL) are cytoplasmic. The Internalization signal signature appears at 329 to 332 (YQNI).

In terms of assembly, heterodimer with B2M (beta-2-microglobulin). Interacts with saposin C.

It localises to the cell membrane. It is found in the endosome membrane. The protein localises to the lysosome membrane. Antigen-presenting protein that binds self and non-self lipid and glycolipid antigens and presents them to T-cell receptors on natural killer T-cells. This Ovis aries (Sheep) protein is T-cell surface glycoprotein CD1b-2.